The chain runs to 932 residues: Protein translocase subunit SecA (932 aa).

ATP contacts are provided by residues Gln87, 105–109 (GEGKT), and Asp515. The Zn(2+) site is built by Cys916, Cys918, Cys927, and His928.

Belongs to the SecA family. In terms of assembly, monomer and homodimer. Part of the essential Sec protein translocation apparatus which comprises SecA, SecYEG and auxiliary proteins SecDF-YajC and YidC. The cofactor is Zn(2+).

It localises to the cell inner membrane. The protein localises to the cytoplasm. The enzyme catalyses ATP + H2O + cellular proteinSide 1 = ADP + phosphate + cellular proteinSide 2.. Part of the Sec protein translocase complex. Interacts with the SecYEG preprotein conducting channel. Has a central role in coupling the hydrolysis of ATP to the transfer of proteins into and across the cell membrane, serving both as a receptor for the preprotein-SecB complex and as an ATP-driven molecular motor driving the stepwise translocation of polypeptide chains across the membrane. The protein is Protein translocase subunit SecA of Burkholderia lata (strain ATCC 17760 / DSM 23089 / LMG 22485 / NCIMB 9086 / R18194 / 383).